Here is a 201-residue protein sequence, read N- to C-terminus: MSRYTGPSWRVSRRLGVSLSGTGKELARRAYAPGDHGRDRRGKLSEYGTQLREKQKLRFMYGMTERQFSNLFVRAGKIKEGTHGANFMALLERRLDNMVYRLGLATTRRQARQLVNHGHITVDGKRVDIPSYEVKVGQIIAVRDKSKNLDIIKNAVEAVVSRPSYVDFDADKLEGKLNRIPAREDMNADIDEALIVEFYNK.

A disordered region spans residues 26–46 (LARRAYAPGDHGRDRRGKLSE). The span at 35–44 (DHGRDRRGKL) shows a compositional bias: basic and acidic residues. An S4 RNA-binding domain is found at 93 to 156 (RRLDNMVYRL…KNLDIIKNAV (64 aa)).

It belongs to the universal ribosomal protein uS4 family. As to quaternary structure, part of the 30S ribosomal subunit. Contacts protein S5. The interaction surface between S4 and S5 is involved in control of translational fidelity.

Its function is as follows. One of the primary rRNA binding proteins, it binds directly to 16S rRNA where it nucleates assembly of the body of the 30S subunit. In terms of biological role, with S5 and S12 plays an important role in translational accuracy. This Limosilactobacillus reuteri (strain DSM 20016) (Lactobacillus reuteri) protein is Small ribosomal subunit protein uS4.